Consider the following 97-residue polypeptide: Kininogen-1 (97 aa).

The signal sequence occupies residues 1 to 23 (MRLWFCLSFLIILCVEHFPGTLA).

Belongs to the bradykinin-related peptide family. As to expression, expressed by the skin glands.

Its subcellular location is the secreted. Functionally, [Ala3,Thr6]bradykinin: produces in vitro relaxation of rat arterial smooth muscle and constriction of intestinal smooth muscle. Possesses insulin-releasing activity. May target bradykinin receptors (BDKRB). In Bombina variegata (Yellow-bellied toad), this protein is Kininogen-1.